Reading from the N-terminus, the 180-residue chain is Large ribosomal subunit protein uL5 (180 aa).

This sequence belongs to the universal ribosomal protein uL5 family. As to quaternary structure, part of the 50S ribosomal subunit; part of the 5S rRNA/L5/L18/L25 subcomplex. Contacts the 5S rRNA and the P site tRNA. Forms a bridge to the 30S subunit in the 70S ribosome.

Its function is as follows. This is one of the proteins that bind and probably mediate the attachment of the 5S RNA into the large ribosomal subunit, where it forms part of the central protuberance. In the 70S ribosome it contacts protein S13 of the 30S subunit (bridge B1b), connecting the 2 subunits; this bridge is implicated in subunit movement. Contacts the P site tRNA; the 5S rRNA and some of its associated proteins might help stabilize positioning of ribosome-bound tRNAs. The sequence is that of Large ribosomal subunit protein uL5 from Ralstonia nicotianae (strain ATCC BAA-1114 / GMI1000) (Ralstonia solanacearum).